The sequence spans 823 residues: MDNTYNPQEVEEQAQQYWHKKQSFNVTEDLNKEKFYCLSMFPYPSGTLHMGHVRNYTLGDVIARYQRALGKNVLQPIGWDSFGLPAENAAIKNKIPPAEWTRKNIAAMKEQFLRLGNAYDWKREITTCDPEYYRWEQWFFIRLFEKGLVYKKNAVVNWDPVDQTVLANEQVVDGRGWRSGALVERKEISQWFIKITSYADELLSSLDSLDEWPAQVKQMQRNWIGKSIGTEIYFNVNNYPKRLKIYTTRPDTLMGATYLAVATDHPLAKEAASNNKKVQEFLDSCQGIKIAEAELATMEKRGIDTGMTAIHPITGKELPIWVANFVLMQYGSGAVMAVPAHDQRDWEFAQKYQLPVKQVIKPIGIEHDFNQSAYTEEGILINSNQFDNLLSSKAIQVITNFLEENDAGKATINYRLRDWGVSRQRYWGTPIPMIICEQCGIVPVPDEELPVVLPENVDFTGTGSPLTQCKEFVNITCPKCGQDATRETDTFDTFVESSWYYARFACKGQENAMLDDRAKYWTPVDQYIGGIEHAVMHLLYARFFHKLMRDEGLVNSDEPFKALLTQGMVLKDGHKMSKSLGNVVDPNHLINTYGADTARLFVMFASPPEQSLEWSDSGVEGAHRFLKRVWAFSHQHRDMLIDINDSILSGNGHVDWKEAESRLKKSRHIVHQILAQATHDYDRNQFNTVVSGCMKLFNEISDYSIETENDKFFIHSSISILLRLLAPITPHICHCLWQQLGFDKAIIDAPWPKVDKSALKTDEVDYVVQVNGKLRAQFTASTDATEEELIAAAKEHAHNFVVNHTIKKAIIVPHRQLINLVIG.

A 'HIGH' region motif is present at residues Pro42–His52. The 'KMSKS' region motif lies at Lys575–Ser579. An ATP-binding site is contributed by Lys578.

This sequence belongs to the class-I aminoacyl-tRNA synthetase family.

It is found in the cytoplasm. It catalyses the reaction tRNA(Leu) + L-leucine + ATP = L-leucyl-tRNA(Leu) + AMP + diphosphate. The sequence is that of Leucine--tRNA ligase from Legionella pneumophila (strain Lens).